Consider the following 152-residue polypeptide: Protein NrdI (152 aa).

The protein belongs to the NrdI family.

Probably involved in ribonucleotide reductase function. This Mycolicibacterium vanbaalenii (strain DSM 7251 / JCM 13017 / BCRC 16820 / KCTC 9966 / NRRL B-24157 / PYR-1) (Mycobacterium vanbaalenii) protein is Protein NrdI.